The following is a 169-amino-acid chain: Phosphopantetheine adenylyltransferase (169 aa).

A substrate-binding site is contributed by serine 8. Residues 8–9 and histidine 16 contribute to the ATP site; that span reads SF. Lysine 40, threonine 72, and arginine 86 together coordinate substrate. Residues 87–89, glutamate 97, and 122–128 contribute to the ATP site; these read GLR and YSFLSSS.

Belongs to the bacterial CoaD family. In terms of assembly, homohexamer. The cofactor is Mg(2+).

The protein localises to the cytoplasm. The enzyme catalyses (R)-4'-phosphopantetheine + ATP + H(+) = 3'-dephospho-CoA + diphosphate. Its pathway is cofactor biosynthesis; coenzyme A biosynthesis; CoA from (R)-pantothenate: step 4/5. Functionally, reversibly transfers an adenylyl group from ATP to 4'-phosphopantetheine, yielding dephospho-CoA (dPCoA) and pyrophosphate. The sequence is that of Phosphopantetheine adenylyltransferase from Cyanothece sp. (strain PCC 7425 / ATCC 29141).